Here is an 891-residue protein sequence, read N- to C-terminus: MATQIDASSEAAAATAAAQHTPMMQQYLRIKSEHPDTLVFYRMGDFYELFFEDAEKAARLLDLTLTQRGASAGTPIKMAGVPHHAVEQYLAKLVKFGESAAICEQIGDPATSKGPVERKVVRVVTPGTLTDAALLSDKSDVFLLALCVGHNKRGVASNIGLAWLNLASGALRLAELAPDQLGAALERIRPAEILAADGTIESVPAGMGAITRVPAWHFDIASGTQRLCDQLEVASLDGFGAQALTSANGAAGALLIYAAATQGQQLRHVRSLKVENESEYIGLDPSTRRNLELTETLRGTESPTLYSLLDTCCTAMGSRLLRHWLHHPPRASVAAQARHQAIGALLDAPPNAGLDSLRSALRQIADVERITGRLALLSARPRDLSSLRDTFAALPALRERVAEIASNAAALGRLEAALEPPPGCLDLLTRAIAAEPAAMVRDGGVIARGYDAELDELRDISENCGQFLIDLETRERARTGISNLRVEYNKVHGFYIEVTRGQTDKVPDDYRRRQTLKNAERYITPELKTFEDKALSAQERALARERALYDGVLQALLPHIEGCQRVASGLAELDLLAAFAERARTLDWVAPEFTDEIGIEIDQGRHPVVEAQVEQFIANDCALNPERKLLLITGPNMGGKSTFMRQTALIALMAYVGSYVPAKAARFGPIDRIFTRIGAADDLAGGRSTFMVEMTEAAAILNDATPHSLVLMDEIGRGTSTFDGLALAWAIARHLLSHNRCYTLFATHYFELTQLPAEFPQAANVHLSAVEHGHGIVFLHAVEEGPANQSYGLQVAQLAGVPAPVIRAARKHLEHLEQQSAAQATPQLDLFAAPPVVDEPECNEPPAAATPHPALERLLELDPDDLKPRDALDLLYELHTLARSGPADAQR.

Residue 634-641 participates in ATP binding; that stretch reads GPNMGGKS.

It belongs to the DNA mismatch repair MutS family.

Its function is as follows. This protein is involved in the repair of mismatches in DNA. It is possible that it carries out the mismatch recognition step. This protein has a weak ATPase activity. In Burkholderia pseudomallei (strain 1106a), this protein is DNA mismatch repair protein MutS.